We begin with the raw amino-acid sequence, 127 residues long: Flagellar assembly factor FliW (127 aa).

This sequence belongs to the FliW family. In terms of assembly, interacts with translational regulator CsrA and flagellin(s).

The protein localises to the cytoplasm. In terms of biological role, acts as an anti-CsrA protein, binds CsrA and prevents it from repressing translation of its target genes, one of which is flagellin. Binds to flagellin and participates in the assembly of the flagellum. This is Flagellar assembly factor FliW from Campylobacter concisus (strain 13826).